The chain runs to 190 residues: Potassium-transporting ATPase KdpC subunit (190 aa).

The helical transmembrane segment at 9-29 (VMFILFTIICGGIYPSVVTGI) threads the bilayer.

The protein belongs to the KdpC family. In terms of assembly, the system is composed of three essential subunits: KdpA, KdpB and KdpC.

It is found in the cell inner membrane. Functionally, part of the high-affinity ATP-driven potassium transport (or Kdp) system, which catalyzes the hydrolysis of ATP coupled with the electrogenic transport of potassium into the cytoplasm. This subunit acts as a catalytic chaperone that increases the ATP-binding affinity of the ATP-hydrolyzing subunit KdpB by the formation of a transient KdpB/KdpC/ATP ternary complex. The protein is Potassium-transporting ATPase KdpC subunit of Citrifermentans bemidjiense (strain ATCC BAA-1014 / DSM 16622 / JCM 12645 / Bem) (Geobacter bemidjiensis).